Reading from the N-terminus, the 230-residue chain is GDT1-like protein 4 (230 aa).

6 helical membrane-spanning segments follow: residues 12–32 (LAMT…AILA), 39–59 (LVLA…ATLG), 71–91 (THHI…WDGF), 135–155 (AFLT…NFFG), 175–195 (FGVV…AVIG), and 207–227 (IVAL…YLTS).

Belongs to the GDT1 family.

The protein localises to the membrane. The chain is GDT1-like protein 4 from Arabidopsis thaliana (Mouse-ear cress).